A 737-amino-acid chain; its full sequence is SANT and BTB domain regulator of class switch recombination (737 aa).

Residues 21 to 59 (DMILYPLIGIPQTINWETVARLVPGLTPKECVKRFDELK) enclose the SANT domain. The 109-residue stretch at 147–255 (MVIHVCDEAK…QCIQYCHKNM (109 aa)) folds into the BTB domain. The span at 555 to 576 (SEEEEYTTGSEVTEDEVGDEEE) shows a compositional bias: acidic residues. The tract at residues 555 to 618 (SEEEEYTTGS…TLEKSTSRDV (64 aa)) is disordered. A compositionally biased stretch (basic residues) spans 580-595 (KQRKKEKPKKFTKPPK). Residues 604 to 615 (QKKEKTLEKSTS) are compositionally biased toward basic and acidic residues.

Belongs to the KIAA1841 family. Homodimer. Interacts (via the BTB domain) with HDAC1 and NCOR2.

Its function is as follows. Negatively regulates class switch recombination or isotype switching in splenic B-cells. In Rattus norvegicus (Rat), this protein is SANT and BTB domain regulator of class switch recombination.